The primary structure comprises 150 residues: Large ribosomal subunit protein bL9 (150 aa).

It belongs to the bacterial ribosomal protein bL9 family.

In terms of biological role, binds to the 23S rRNA. In Pediococcus pentosaceus (strain ATCC 25745 / CCUG 21536 / LMG 10740 / 183-1w), this protein is Large ribosomal subunit protein bL9.